The following is a 783-amino-acid chain: BMP/retinoic acid-inducible neural-specific protein 2 (783 aa).

An N-terminal signal peptide occupies residues 1-33 (MRWPCSSRFRGLWPEAAPWAVLLALGVPGWVLA). In terms of domain architecture, MACPF spans 85–281 (RYRIYREFAR…FVAAALSYIT (197 aa)). N-linked (GlcNAc...) asparagine glycosylation is found at asparagine 185, asparagine 354, asparagine 473, asparagine 579, asparagine 626, and asparagine 658.

The protein belongs to the BRINP family. Expressed in olfactory bulb, cerebellum and neuronal layers in hippocampus.

Its subcellular location is the secreted. Functionally, inhibits neuronal cell proliferation by negative regulation of the cell cycle transition. The chain is BMP/retinoic acid-inducible neural-specific protein 2 (Brinp2) from Rattus norvegicus (Rat).